The chain runs to 323 residues: Transmembrane protein 59 (323 aa).

The signal sequence occupies residues 1 to 35 (MAAPKGSLWVRAQLGLLPLLLLTMALAGGPGTASA). The Extracellular segment spans residues 36–238 (EAFDSVLGDT…GFLRCLSLNS (203 aa)). An N-linked (GlcNAc...) asparagine glycan is attached at N90. A helical transmembrane segment spans residues 239-259 (GWILTMTLVLSVMVLLWICCA). The Cytoplasmic portion of the chain corresponds to 260–323 (TVATAVEQYV…TKVNLAHSEI (64 aa)). Positions 263 to 281 (TAVEQYVPSEKLSIYGDLE) match the ATG16L1-binding motif motif.

This sequence belongs to the TMEM59 family. As to quaternary structure, interacts with ATG16L1 (via WD repeats). In terms of processing, N-glycosylated.

Its subcellular location is the late endosome membrane. The protein resides in the lysosome membrane. The protein localises to the cell membrane. It is found in the golgi apparatus membrane. Acts as a regulator of autophagy in response to S.aureus infection by promoting activation of LC3 (MAP1LC3A, MAP1LC3B or MAP1LC3C). Acts by interacting with ATG16L1, leading to promote a functional complex between LC3 and ATG16L1 and promoting LC3 lipidation and subsequent activation of autophagy. Modulates the O-glycosylation and complex N-glycosylation steps occurring during the Golgi maturation of several proteins such as APP, BACE1, SEAP or PRNP. Inhibits APP transport to the cell surface and further shedding. The polypeptide is Transmembrane protein 59 (TMEM59) (Sus scrofa (Pig)).